The following is a 137-amino-acid chain: Large ribosomal subunit protein uL16 (137 aa).

Over residues 1-19 the composition is skewed to basic residues; the sequence is MLSPKKVKFRKQQRGRRTG. Positions 1 to 20 are disordered; the sequence is MLSPKKVKFRKQQRGRRTGT.

It belongs to the universal ribosomal protein uL16 family. Part of the 50S ribosomal subunit.

Binds 23S rRNA and is also seen to make contacts with the A and possibly P site tRNAs. The protein is Large ribosomal subunit protein uL16 of Desulfosudis oleivorans (strain DSM 6200 / JCM 39069 / Hxd3) (Desulfococcus oleovorans).